The chain runs to 505 residues: Retinoic acid receptor gamma (505 aa).

2 disordered regions span residues 1-57 (MMKF…SSKD) and 113-134 (SLSV…PSPP). Basic and acidic residues-rich tracts occupy residues 12 to 22 (DGGERPEEEGK) and 32 to 46 (MGKE…KEEA). Residues 52–142 (MSSSKDRICS…PPPPPRVYKP (91 aa)) are modulating. The span at 115 to 124 (SVETQSTSSE) shows a compositional bias: polar residues. 2 consecutive NR C4-type zinc fingers follow at residues 143–163 (CFVC…CEGC) and 179–203 (CHRD…LQKC). The nuclear receptor DNA-binding region spans 143-208 (CFVCNDKSSG…RLQKCFEVGM (66 aa)). The segment at 209 to 237 (SKEAVRNDRNKKKKEIKEEVVTDSYEMPP) is hinge. The region spanning 238 to 472 (EMEALIQKVS…PLIREMLENP (235 aa)) is the NR LBD domain. Residues 462-505 (PPLIREMLENPEAFEDDASPPPKSEQKPIKVEEKPGEKTSTKDP) are disordered. The span at 485 to 505 (SEQKPIKVEEKPGEKTSTKDP) shows a compositional bias: basic and acidic residues.

The protein belongs to the nuclear hormone receptor family. NR1 subfamily. Heterodimer; with a RXR molecule. Binds DNA preferentially as a RAR/RXR heterodimer. Isoform Delta-1A and Isoform Delta-1B are most abundant in regenerating limbs, tails, and the anterior half of the lower jaw. Isoform Delta-2 is broadly and uniformly distributed.

It localises to the nucleus. In terms of biological role, receptor for retinoic acid. Retinoic acid receptors bind as heterodimers to their target response elements in response to their ligands, all-trans or 9-cis retinoic acid, and regulate gene expression in various biological processes. The RAR/RXR heterodimers bind to the retinoic acid response elements (RARE) composed of tandem 5'-AGGTCA-3' sites known as DR1-DR5. This is Retinoic acid receptor gamma (RARG) from Notophthalmus viridescens (Eastern newt).